The chain runs to 420 residues: Cytochrome P-450 monooxygenase DoxA (420 aa).

C367 contributes to the heme binding site.

The protein belongs to the cytochrome P450 family. As to quaternary structure, monomer. It depends on heme as a cofactor.

Its subcellular location is the cytoplasm. The enzyme catalyses 13-deoxydaunorubicin + NADPH + O2 + H(+) = 13-dihydrodaunorubicin + NADP(+) + H2O. It carries out the reaction 13-dihydrodaunorubicin + NADPH + O2 + H(+) = daunorubicin + NADP(+) + 2 H2O. It catalyses the reaction 13-deoxycarminomycin + NADPH + O2 + H(+) = 13-dihydrocarminomycin + NADP(+) + H2O. The catalysed reaction is 13-dihydrocarminomycin + NADPH + O2 + H(+) = carminomycin + NADP(+) + 2 H2O. The enzyme catalyses daunorubicin + NADPH + O2 + H(+) = doxorubicin + NADP(+) + H2O. Its pathway is antibiotic biosynthesis; daunorubicin biosynthesis. It participates in antibiotic biosynthesis; carminomycin biosynthesis. The protein operates within antibiotic biosynthesis; doxorubicin biosynthesis. In terms of biological role, involved in the biosynthesis of the anthracyclines carminomycin, daunorubicin (daunomycin) and doxorubicin (adriamycin) which are aromatic polyketide antibiotics that exhibit high cytotoxicity and are widely applied in the chemotherapy of a variety of cancers. In vivo, DoxA catalyzes the C-13 hydroxylation of 13-deoxycarminomycin and 13-deoxydaunorubicin to yield 13-dihydrocarminomycin and 13-dihydrodaunorubicin, respectively, as well as the oxidation of these 13-dihydro-anthracyclines to their respective 13-keto forms, carminomycin and daunorubicin. In vivo, it also catalyzes the C-14 hydroxylation of daunorubicin to form doxorubicin. It can only use NADP. DoxA acts jointly with DnrV. The polypeptide is Cytochrome P-450 monooxygenase DoxA (doxA) (Streptomyces peucetius subsp. caesius).